The chain runs to 228 residues: Thymidylate kinase (228 aa).

Residues 1 to 10 (MSDSAVQRSS) are compositionally biased toward polar residues. Positions 1-23 (MSDSAVQRSSGRGRFITFEGGEG) are disordered. Residue 20–27 (GGEGTGKS) coordinates ATP.

The protein belongs to the thymidylate kinase family.

The enzyme catalyses dTMP + ATP = dTDP + ADP. Its function is as follows. Phosphorylation of dTMP to form dTDP in both de novo and salvage pathways of dTTP synthesis. This Bradyrhizobium diazoefficiens (strain JCM 10833 / BCRC 13528 / IAM 13628 / NBRC 14792 / USDA 110) protein is Thymidylate kinase.